A 465-amino-acid chain; its full sequence is Pancreatic triacylglycerol lipase (465 aa).

Residues 1–16 (MLLLWALPLLLGAVAG) form the signal peptide. Disulfide bonds link Cys20–Cys26 and Cys108–Cys119. The active-site Nucleophile is the Ser170. Asp194 serves as the catalytic Charge relay system. Ca(2+)-binding residues include Glu205, Arg208, Asp210, and Asp213. Residues Cys255 and Cys279 are joined by a disulfide bond. Residue His281 is the Charge relay system of the active site. Intrachain disulfides connect Cys303–Cys314, Cys317–Cys321, and Cys449–Cys465. Residues 355-465 (WRYQVAVTLS…EDILLTLTPC (111 aa)) form the PLAT domain.

The protein belongs to the AB hydrolase superfamily. Lipase family. In terms of assembly, forms a 1:1 stoichiometric complex with (pro)colipase/CLPS.

The protein resides in the secreted. The catalysed reaction is a triacylglycerol + H2O = a diacylglycerol + a fatty acid + H(+). The enzyme catalyses 1,2,3-tributanoylglycerol + H2O = dibutanoylglycerol + butanoate + H(+). It catalyses the reaction 1,2,3-tri-(9Z-octadecenoyl)-glycerol + H2O = di-(9Z)-octadecenoylglycerol + (9Z)-octadecenoate + H(+). It carries out the reaction all-trans-retinyl hexadecanoate + H2O = all-trans-retinol + hexadecanoate + H(+). The catalysed reaction is 1,2-di-(9Z-octadecenoyl)-glycerol + H2O = (9Z-octadecenoyl)-glycerol + (9Z)-octadecenoate + H(+). With respect to regulation, inhibited by bile salts, is reactivated by (pro)colipase/CLPS. In terms of biological role, plays an important role in fat metabolism. It preferentially splits the esters of long-chain fatty acids at positions 1 and 3, producing mainly 2-monoacylglycerol and free fatty acids, and shows considerably higher activity against insoluble emulsified substrates than against soluble ones. The chain is Pancreatic triacylglycerol lipase (PNLIP) from Oryctolagus cuniculus (Rabbit).